The primary structure comprises 505 residues: MSRSYNDELQYLDKIHKNCWRIKKGFVPNMLVEGVFYVNDPLEKLMFEELRNACRGGGFGGFLPAMKQIGNVAALPGIVHRSIGLPDVHSGYGFAIGNMAAFDMENPDAVVSPGGVGFDINCGVRLLRTNLDEGDVQPVKEQLAQSLFDHIPVGVGSKGVIPMGAKDLEEALEMGVDWSLREGYAWAEDKEHCEEYGRMLQADPNKVSSKAKKRGLPQLGTLGAGNHYAEIQVVDEIYNDYAAKKMGIDHKGQVCVMIHSGSRGLGHQVATDALVAMEKAMKRDRITVNDRQLACARITSEEGQDYLKGMAAAGNYAWVNRSSMTFLTRQAFSKVFSTTPDDLDMHVIYDVSHNIAKVEEHMVDGRQKTLLVHRKGSTRAFPPHHPLIPVDYQLTGQPVLIGGTMGTCSYVLTGTEQGMTETFGTTCHGAGRALSRAKSRRNLDFQDVLDKLADMGIAIRVASPKLVMEEAPESYKNVTDVVNTCHDAGISKKAIKLRPIAVIKG.

Asp-119, Cys-122, His-227, His-259, and His-353 together coordinate Mn(2+). Position 226–230 (226–230) interacts with GMP; sequence NHYAE. GMP is bound by residues 353–354, 402–405, Ser-409, 428–431, and Lys-504; these read HN, GGTM, and HGAG. His-428 (GMP-histidine intermediate) is an active-site residue.

Belongs to the RtcB family. In terms of assembly, catalytic component of the tRNA-splicing ligase complex. Mn(2+) is required as a cofactor.

Its subcellular location is the nucleus. It localises to the cytoplasm. The enzyme catalyses a 3'-end 3'-phospho-ribonucleotide-RNA + a 5'-end dephospho-ribonucleoside-RNA + GTP = a ribonucleotidyl-ribonucleotide-RNA + GMP + diphosphate. The catalysed reaction is a 3'-end 2',3'-cyclophospho-ribonucleotide-RNA + a 5'-end dephospho-ribonucleoside-RNA + GTP + H2O = a ribonucleotidyl-ribonucleotide-RNA + GMP + diphosphate + H(+). Functionally, catalytic subunit of the tRNA-splicing ligase complex that acts by directly joining spliced tRNA halves to mature-sized tRNAs by incorporating the precursor-derived splice junction phosphate into the mature tRNA as a canonical 3',5'-phosphodiester. May act as an RNA ligase with broad substrate specificity, and may function toward other RNAs. In Danio rerio (Zebrafish), this protein is RNA-splicing ligase RtcB homolog.